A 284-amino-acid chain; its full sequence is ASC1-like protein 3 (284 aa).

The next 6 membrane-spanning stretches (helical) occupy residues 9–29, 69–89, 108–128, 148–168, 195–215, and 243–263; these read SSFF…RFFL, LTYY…EPWS, LMLF…ALVA, ILIG…ILAL, FGLF…FWII, and MLLT…LMIM. A TLC domain is found at 60 to 267; sequence VKFSESIWKL…ICLMIMKQLN (208 aa).

The protein localises to the endoplasmic reticulum membrane. In terms of biological role, mediates resistance to sphinganine-analog mycotoxins (SAMs) by restoring the sphingolipid biosynthesis. Could salvage the transport of GPI-anchored proteins from the endoplasmic reticulum to the Golgi apparatus in ceramides-depleted cells after SAM exposure. The protein is ASC1-like protein 3 of Oryza sativa subsp. japonica (Rice).